The chain runs to 535 residues: MTAPANNTPAAAATDTSVAALHDKILIVDFGSQVTQLIARRVREDGVYCEIVPFQKAEAAFRQMNPKAVILSGGPESVHEEGSPRAPQLIFESGVPVMGICYGQMTMAAQLGGTVEGGHHREFGRADVEVKTNSLLFDGVWQPGEQHQVWMSHGDRITQMPPGFSVAGVSPNAPFAVIQDEARKYYGLMFHPEVVHTPDGAKLIRNFVRNISGLGGDWTMHAFREEEIKKIRAQVGQGKVICGLSGGVDSAVAAVLIHEAIGDQLTCVFVDHGLLRLNEAETVVDLFRHHYNIPLVHVDASKLFLGELAGVTDPEAKRKTIGRLFIDVFEAEAKKIGGADFLAQGTLYPDVIESVSFTGGPSVTIKSHHNVGGLPARMNMKLVEPLRELFKDEVRVLGRELGLPDVFVGRHPFPGPGLAIRCPGEITTDKLDILRKADAIYIDEIRKAGLYDTIWQAFAVLLPVKTVGVMGDGRTYDYVVGLRAVTSTDGMTADFYPFDMKFLGNTATRIINEVKGVNRVVYDVTSKPPGTIEWE.

The Glutamine amidotransferase type-1 domain maps to 24-217 (KILIVDFGSQ…VRNISGLGGD (194 aa)). Cysteine 101 functions as the Nucleophile in the catalytic mechanism. Residues histidine 191 and glutamate 193 contribute to the active site. The region spanning 218–410 (WTMHAFREEE…LGLPDVFVGR (193 aa)) is the GMPS ATP-PPase domain. An ATP-binding site is contributed by 245–251 (SGGVDSA).

Homodimer.

It catalyses the reaction XMP + L-glutamine + ATP + H2O = GMP + L-glutamate + AMP + diphosphate + 2 H(+). It participates in purine metabolism; GMP biosynthesis; GMP from XMP (L-Gln route): step 1/1. Its function is as follows. Catalyzes the synthesis of GMP from XMP. This Bradyrhizobium sp. (strain ORS 278) protein is GMP synthase [glutamine-hydrolyzing].